Consider the following 119-residue polypeptide: Ribonuclease P protein component (119 aa).

Residues 1-20 (MLPAQHRMTRSTEFGATVSK) are disordered.

It belongs to the RnpA family. In terms of assembly, consists of a catalytic RNA component (M1 or rnpB) and a protein subunit.

The enzyme catalyses Endonucleolytic cleavage of RNA, removing 5'-extranucleotides from tRNA precursor.. In terms of biological role, RNaseP catalyzes the removal of the 5'-leader sequence from pre-tRNA to produce the mature 5'-terminus. It can also cleave other RNA substrates such as 4.5S RNA. The protein component plays an auxiliary but essential role in vivo by binding to the 5'-leader sequence and broadening the substrate specificity of the ribozyme. This chain is Ribonuclease P protein component, found in Mycolicibacterium vanbaalenii (strain DSM 7251 / JCM 13017 / BCRC 16820 / KCTC 9966 / NRRL B-24157 / PYR-1) (Mycobacterium vanbaalenii).